The primary structure comprises 265 residues: Lysosomal membrane ascorbate-dependent ferrireductase CYB561A3 (265 aa).

The Cytoplasmic portion of the chain corresponds to 1–2 (MA). Residues 3 to 23 (VGWFYLSVLALCSLGSMCILF) traverse the membrane as a helical segment. Residues 12-219 (ALCSLGSMCI…FGLLVLYILL (208 aa)) enclose the Cytochrome b561 domain. At 24 to 45 (TIYWMRYWHGGFAWDGSMLMFN) the chain is on the lumenal side. The helical transmembrane segment at 46–66 (WHPVLMVTGMVVLYSAASLVY) threads the bilayer. Residues His47 and Arg67 each contribute to the heme b site. The Cytoplasmic segment spans residues 67-83 (RLPQSWVGPRLPWKSGH). The L-ascorbate site is built by Arg76 and Lys80. His83 lines the heme b pocket. The helical transmembrane segment at 84-104 (AAMHLLAFLLTVLGLHAVFEF) threads the bilayer. Residues 105-119 (HNHAKIPHLYSLHSW) lie on the Lumenal side of the membrane. Residues 112–115 (HLYS) and His117 contribute to the heme b site. The chain crosses the membrane as a helical span at residues 120-140 (LGITTVFLFACQWFLGFSVFL). Over 141–154 (LPWASMWLRSLLKP) the chain is Cytoplasmic. An L-ascorbate-binding site is contributed by Arg149. A helical membrane pass occupies residues 155 to 175 (IHVFFGASILSLAIASVVSGI). The heme b site is built by His156 and Glu177. The Lumenal segment spans residues 176–197 (NEKLFFSLKNGTKTYSNLPSEA). The N-linked (GlcNAc...) asparagine glycan is linked to Asn185. The chain crosses the membrane as a helical span at residues 198–218 (VFANCAGMLVVVFGLLVLYIL). The Cytoplasmic portion of the chain corresponds to 219-265 (LASSWKRPEPGMQAEREPTRTRGRAGTPEVMLEGERGLAEPLLQKRS). Residue Lys224 coordinates heme b. Positions 228–238 (PGMQAEREPTR) are enriched in basic and acidic residues. The interval 228 to 265 (PGMQAEREPTRTRGRAGTPEVMLEGERGLAEPLLQKRS) is disordered.

As to quaternary structure, homodimer. Requires heme b as cofactor. N-glycosylated.

The protein localises to the late endosome membrane. The protein resides in the lysosome membrane. The catalysed reaction is Fe(3+)(out) + L-ascorbate(in) = monodehydro-L-ascorbate radical(in) + Fe(2+)(out) + H(+). In terms of biological role, transmembrane reductase that uses ascorbate as an electron donor in the cytoplasm and transfers electrons across membranes to reduce iron cations Fe(3+) into Fe(2+) in the lumen of the late endosome and lysosome. Reduced iron can then be extruded from the late endosome and lysosome to the cytoplasm by divalent metal-specific transporters. It is therefore most probably involved in endosomal and lysosomal cellular iron homeostasis. The chain is Lysosomal membrane ascorbate-dependent ferrireductase CYB561A3 from Bos taurus (Bovine).